The primary structure comprises 1597 residues: Transmembrane protein 131-like (1597 aa).

The N-terminal stretch at 1–40 is a signal peptide; that stretch reads MAGLRRPQSGAYRRTAAAVNLLLGVFQVLLSCCRPGGAQG. Over 41–869 the chain is Extracellular; sequence QAFEPLPNVV…VVPGPSWEES (829 aa). N-linked (GlcNAc...) asparagine glycans are attached at residues asparagine 343, asparagine 593, asparagine 709, and asparagine 846. The tract at residues 696 to 916 is required for Wnt-signaling inhibition and LRP6 degradation; that stretch reads DYGKVTSLIL…QNGSSSSQQN (221 aa). A helical transmembrane segment spans residues 870 to 890; that stretch reads FWRLTVFFVSLSLLGVILIAF. Over 891 to 1597 the chain is Cytoplasmic; it reads QQAQYILMEF…SRDSSYCGNM (707 aa). The span at 907 to 917 shows a compositional bias: low complexity; the sequence is QNGSSSSQQNG. Disordered regions lie at residues 907–928, 1096–1240, and 1252–1322; these read QNGS…SHPH, AELK…EQRL, and DGAG…SDCD. Over residues 1213–1222 the composition is skewed to basic residues; it reads RPCRRNKKRA. The segment covering 1223–1239 has biased composition (low complexity); it reads SAQASSSPRPSEQSEQR. The segment covering 1269–1290 has biased composition (basic and acidic residues); sequence PERREEDSYYQKSEKKCADKFC. Over residues 1291–1319 the composition is skewed to low complexity; the sequence is SDSSSDCGSSSGSVRASRGSWGSWSSSSS.

This sequence belongs to the TMEM131 family.

Its subcellular location is the cell membrane. It localises to the endoplasmic reticulum. It is found in the cytoplasm. In its membrane-associated form, antagonizes canonical Wnt signaling by triggering lysosome-dependent degradation of Wnt-activated LRP6. Regulates thymocyte proliferation. The sequence is that of Transmembrane protein 131-like from Mus musculus (Mouse).